A 259-amino-acid polypeptide reads, in one-letter code: Acetylglutamate kinase (259 aa).

Substrate contacts are provided by residues 46-47, Arg-68, and Asn-162; that span reads GG.

This sequence belongs to the acetylglutamate kinase family. ArgB subfamily.

The protein resides in the cytoplasm. The enzyme catalyses N-acetyl-L-glutamate + ATP = N-acetyl-L-glutamyl 5-phosphate + ADP. The protein operates within amino-acid biosynthesis; L-arginine biosynthesis; N(2)-acetyl-L-ornithine from L-glutamate: step 2/4. In terms of biological role, catalyzes the ATP-dependent phosphorylation of N-acetyl-L-glutamate. This chain is Acetylglutamate kinase, found in Roseiflexus castenholzii (strain DSM 13941 / HLO8).